A 652-amino-acid chain; its full sequence is ATP-dependent zinc metalloprotease FtsH 1 (652 aa).

At 1 to 9 (MSDNKWLRN) the chain is on the cytoplasmic side. The chain crosses the membrane as a helical span at residues 10–30 (GFVWMILIIAAIAVWVTFVQG). Residues 31–110 (GRGGATITTQ…QTHRASQWGN (80 aa)) lie on the Extracellular side of the membrane. A helical transmembrane segment spans residues 111 to 131 (VLGTLTFLLPTLFLIGVIIFM). The Cytoplasmic segment spans residues 132–652 (MRQAQGTNNQ…VPHIKPQPAS (521 aa)). 203–210 (GPPGTGKT) is a binding site for ATP. Histidine 425 serves as a coordination point for Zn(2+). Glutamate 426 is an active-site residue. The Zn(2+) site is built by histidine 429 and aspartate 501. Residues 623 to 652 (IATPETARPDSPSEARPAAPVPHIKPQPAS) form a disordered region. Positions 641-652 (APVPHIKPQPAS) are enriched in pro residues.

It in the central section; belongs to the AAA ATPase family. The protein in the C-terminal section; belongs to the peptidase M41 family. Homohexamer. Zn(2+) is required as a cofactor.

It localises to the cell membrane. Acts as a processive, ATP-dependent zinc metallopeptidase for both cytoplasmic and membrane proteins. Plays a role in the quality control of integral membrane proteins. The sequence is that of ATP-dependent zinc metalloprotease FtsH 1 from Thermomicrobium roseum (strain ATCC 27502 / DSM 5159 / P-2).